A 439-amino-acid polypeptide reads, in one-letter code: GTPase Der (439 aa).

EngA-type G domains lie at 4-168 and 177-352; these read PIVA…KDDE and INIA…DNYN. GTP-binding positions include 10–17, 57–61, 120–123, 183–190, 230–234, and 295–298; these read GRPNVGKS, DTGGI, NKID, GKPNVGKS, DTAGL, and NKWD. A KH-like domain is found at 353 to 437; it reads KRVKTGVLND…GIKSEFRERK (85 aa).

This sequence belongs to the TRAFAC class TrmE-Era-EngA-EngB-Septin-like GTPase superfamily. EngA (Der) GTPase family. In terms of assembly, associates with the 50S ribosomal subunit.

In terms of biological role, GTPase that plays an essential role in the late steps of ribosome biogenesis. The sequence is that of GTPase Der from Clostridium botulinum (strain ATCC 19397 / Type A).